We begin with the raw amino-acid sequence, 289 residues long: Oxaloacetate decarboxylase (289 aa).

Serine 50 is a binding site for substrate. Residue aspartate 88 coordinates Mg(2+). 2 residues coordinate substrate: arginine 159 and histidine 235.

Belongs to the isocitrate lyase/PEP mutase superfamily. Oxaloacetate decarboxylase family. In terms of assembly, homotetramer; dimer of dimers. Mg(2+) is required as a cofactor.

It catalyses the reaction oxaloacetate + H(+) = pyruvate + CO2. Functionally, catalyzes the decarboxylation of oxaloacetate into pyruvate. Seems to play a role in maintaining cellular concentrations of bicarbonate and pyruvate. This is Oxaloacetate decarboxylase from Pseudomonas putida (strain ATCC 47054 / DSM 6125 / CFBP 8728 / NCIMB 11950 / KT2440).